We begin with the raw amino-acid sequence, 406 residues long: MANVLDELLDRGYIKQFTHEEETRKLLENEKVTFYIGFDPTADSLHVGHFIAMMFMAHMQRAGHRPIALLGGGTAMVGDPSGKTDMRKMLTKEQIQHNVDSIKKQMERFIDFSDDKALIVNNADWLLDLNYVDFLREVGVHFSVNRMLSAECFKQRLEKGLSFLEFNYMLMQGYDFYVLNQKYGCKMELGGDDQWSNMIAGVELVRRKAQGDAMAMTCTLLTNSQGQKMGKTVGGALWLDADKVSPFDFYQYWRNVDDADVEKCLALLTFLPMDEVRRLGALEGAEINGAKKILAFEVTKLVHGEEEAKKAEEAANALFSGGADMSNVPTVTIAKEDLGSTVLDIIAKTKIVPSKKEGRRLIEQGGLSINGEKIIDLTRTLNEDDFEDGSALIKRGKKNYNKIEIQ.

L-tyrosine is bound at residue Tyr-35. The 'HIGH' region motif lies at Pro-40–His-49. L-tyrosine is bound by residues Tyr-168 and Gln-172. Positions Lys-228–Thr-232 match the 'KMSKS' region motif. An ATP-binding site is contributed by Lys-231. The 65-residue stretch at Ser-340 to Glu-404 folds into the S4 RNA-binding domain.

It belongs to the class-I aminoacyl-tRNA synthetase family. TyrS type 1 subfamily. As to quaternary structure, homodimer.

It is found in the cytoplasm. It catalyses the reaction tRNA(Tyr) + L-tyrosine + ATP = L-tyrosyl-tRNA(Tyr) + AMP + diphosphate + H(+). Catalyzes the attachment of tyrosine to tRNA(Tyr) in a two-step reaction: tyrosine is first activated by ATP to form Tyr-AMP and then transferred to the acceptor end of tRNA(Tyr). In Clostridium botulinum (strain Alaska E43 / Type E3), this protein is Tyrosine--tRNA ligase.